A 303-amino-acid chain; its full sequence is Elongation factor Ts (303 aa).

Residues 80–83 (TDFV) form an involved in Mg(2+) ion dislocation from EF-Tu region.

Belongs to the EF-Ts family.

The protein resides in the cytoplasm. In terms of biological role, associates with the EF-Tu.GDP complex and induces the exchange of GDP to GTP. It remains bound to the aminoacyl-tRNA.EF-Tu.GTP complex up to the GTP hydrolysis stage on the ribosome. The sequence is that of Elongation factor Ts from Clostridium perfringens (strain ATCC 13124 / DSM 756 / JCM 1290 / NCIMB 6125 / NCTC 8237 / Type A).